Reading from the N-terminus, the 47-residue chain is Delta-actitoxin-Aspp1b (47 aa).

3 cysteine pairs are disulfide-bonded: cysteine 4–cysteine 44, cysteine 6–cysteine 34, and cysteine 27–cysteine 45.

It belongs to the sea anemone sodium channel inhibitory toxin family. Type I subfamily.

Its subcellular location is the secreted. It is found in the nematocyst. Functionally, binds specifically to voltage-gated sodium channels (Nav), thereby delaying their inactivation during signal transduction. Has a longer mammalian heart stimulation effect than Hk2a, Hk8a and Hk16a. The chain is Delta-actitoxin-Aspp1b from Anthopleura sp. (strain 'Zhanjiang') (Sea anemone).